We begin with the raw amino-acid sequence, 529 residues long: uncharacterized protein (529 aa).

D389 (nucleophile) is an active-site residue. E392 is an active-site residue. D459 functions as the Proton donor in the catalytic mechanism.

The protein belongs to the glycosyl hydrolase 31 family.

This is an uncharacterized protein from Pseudescherichia vulneris (Escherichia vulneris).